We begin with the raw amino-acid sequence, 432 residues long: Adenylosuccinate synthetase (432 aa).

GTP-binding positions include 12-18 (GDEGKGK) and 40-42 (GHT). The active-site Proton acceptor is the D13. Mg(2+) contacts are provided by D13 and G40. Residues 13 to 16 (DEGK), 38 to 41 (NAGH), T132, R146, Q226, T241, and R305 each bind IMP. H41 (proton donor) is an active-site residue. 301–307 (VVTGRKR) contributes to the substrate binding site. GTP-binding positions include R307, 333-335 (KLD), and 415-417 (STS).

Belongs to the adenylosuccinate synthetase family. As to quaternary structure, homodimer. The cofactor is Mg(2+).

It is found in the cytoplasm. The catalysed reaction is IMP + L-aspartate + GTP = N(6)-(1,2-dicarboxyethyl)-AMP + GDP + phosphate + 2 H(+). The protein operates within purine metabolism; AMP biosynthesis via de novo pathway; AMP from IMP: step 1/2. In terms of biological role, plays an important role in the de novo pathway of purine nucleotide biosynthesis. Catalyzes the first committed step in the biosynthesis of AMP from IMP. This Rhizobium etli (strain CIAT 652) protein is Adenylosuccinate synthetase.